The primary structure comprises 218 residues: Acetoacetyl-CoA:acetate/butyrate CoA transferase alpha subunit (218 aa).

24-30 contributes to the CoA binding site; it reads GGFLNCG.

It belongs to the 3-oxoacid CoA-transferase subunit A family. In terms of assembly, heterotetramer composed of two alpha subunits (CtfA) and two beta subunits (CtfB).

The catalysed reaction is acetoacetate + butanoyl-CoA = acetoacetyl-CoA + butanoate. It catalyses the reaction acetoacetate + acetyl-CoA = acetoacetyl-CoA + acetate. With respect to regulation, the acetate and butyrate conversion reactions are inhibited in vitro by physiological levels of acetone and butanol. Functionally, catalyzes the transfer of CoA from acetoacetyl-CoA to acetate, butyrate and propionate. Also shows low activity with valerate, isobutyrate and crotonate. Plays an important role in the metabolic shift between the acid-producing and solvent-forming states of C.acetobutylicum. Acts mainly to detoxify the medium by removing the acetate and butyrate excreted earlier in the fermentation. This Clostridium acetobutylicum (strain ATCC 824 / DSM 792 / JCM 1419 / IAM 19013 / LMG 5710 / NBRC 13948 / NRRL B-527 / VKM B-1787 / 2291 / W) protein is Acetoacetyl-CoA:acetate/butyrate CoA transferase alpha subunit.